The primary structure comprises 86 residues: Large ribosomal subunit protein bL27 (86 aa).

Residues 1–20 (MAHKKAGGSSRNGRDSESKR) are disordered.

Belongs to the bacterial ribosomal protein bL27 family.

This chain is Large ribosomal subunit protein bL27, found in Paraburkholderia phymatum (strain DSM 17167 / CIP 108236 / LMG 21445 / STM815) (Burkholderia phymatum).